The chain runs to 234 residues: Superoxide dismutase [Mn], mitochondrial (234 aa).

Residues 1 to 34 (MFSIRSSSRVLLKASSATTRATLNAAASKTFTRS) constitute a mitochondrion transit peptide. Residues histidine 60, histidine 108, aspartate 198, and histidine 202 each contribute to the Mn(2+) site.

Belongs to the iron/manganese superoxide dismutase family. In terms of assembly, homotetramer. Requires Mn(2+) as cofactor.

It is found in the mitochondrion matrix. The enzyme catalyses 2 superoxide + 2 H(+) = H2O2 + O2. In terms of biological role, destroys superoxide anion radicals which are normally produced within the cells and which are toxic to biological systems. The protein is Superoxide dismutase [Mn], mitochondrial (SOD2) of Candida albicans (Yeast).